We begin with the raw amino-acid sequence, 84 residues long: uncharacterized protein (84 aa).

This sequence to M.jannaschii MJ1121.

This is an uncharacterized protein from Archaeoglobus fulgidus (strain ATCC 49558 / DSM 4304 / JCM 9628 / NBRC 100126 / VC-16).